The primary structure comprises 120 residues: NAD(P)H-quinone oxidoreductase subunit 3, chloroplastic (120 aa).

Helical transmembrane passes span Ile9 to Gly29, Met64 to Met84, and Val88 to Leu108.

It belongs to the complex I subunit 3 family. As to quaternary structure, NDH is composed of at least 16 different subunits, 5 of which are encoded in the nucleus.

It is found in the plastid. Its subcellular location is the chloroplast thylakoid membrane. It carries out the reaction a plastoquinone + NADH + (n+1) H(+)(in) = a plastoquinol + NAD(+) + n H(+)(out). The catalysed reaction is a plastoquinone + NADPH + (n+1) H(+)(in) = a plastoquinol + NADP(+) + n H(+)(out). Its function is as follows. NDH shuttles electrons from NAD(P)H:plastoquinone, via FMN and iron-sulfur (Fe-S) centers, to quinones in the photosynthetic chain and possibly in a chloroplast respiratory chain. The immediate electron acceptor for the enzyme in this species is believed to be plastoquinone. Couples the redox reaction to proton translocation, and thus conserves the redox energy in a proton gradient. The chain is NAD(P)H-quinone oxidoreductase subunit 3, chloroplastic from Draba nemorosa (Woodland whitlowgrass).